The chain runs to 438 residues: UPF0597 protein YE0448 (438 aa).

This sequence belongs to the UPF0597 family.

The chain is UPF0597 protein YE0448 from Yersinia enterocolitica serotype O:8 / biotype 1B (strain NCTC 13174 / 8081).